The sequence spans 605 residues: Ankyrin repeat domain-containing protein 13D (605 aa).

ANK repeat units lie at residues 39-68 (RGRT…NVGK) and 72-101 (QGWA…YQRA). The segment at 306–333 (AQQHSSHTGAPVQQAASPTNPTAISPEE) is disordered. Over residues 319–328 (QAASPTNPTA) the composition is skewed to polar residues. UIM domains lie at 482–501 (EDDD…AGTE) and 528–547 (EEQL…STEP). Residues 541–605 (LQLSTEPRGP…RILQLSLTEH (65 aa)) form a disordered region. The segment covering 550–563 (PGSPPRTPPAPGPP) has biased composition (pro residues). At serine 552 the chain carries Phosphoserine. Phosphothreonine is present on threonine 556. Low complexity predominate over residues 564–575 (SFEEQLRLALEL). UIM domains are found at residues 564–583 (SFEE…QEER) and 589–605 (QEEE…LTEH). Basic and acidic residues predominate over residues 576–589 (SSREQEERERRGQQ).

In terms of assembly, interacts with EGFR (ubiquitinated); the interaction is direct and may regulate EGFR internalization.

The protein resides in the cell membrane. It is found in the late endosome. Its function is as follows. Ubiquitin-binding protein that specifically recognizes and binds 'Lys-63'-linked ubiquitin. Does not bind 'Lys-48'-linked ubiquitin. Positively regulates the internalization of ligand-activated EGFR by binding to the Ub moiety of ubiquitinated EGFR at the cell membrane. This Homo sapiens (Human) protein is Ankyrin repeat domain-containing protein 13D (ANKRD13D).